The chain runs to 76 residues: Kappa-actitoxin-Avd4g (76 aa).

The first 19 residues, 1-19 (MNKALFLCLVVLCAAVVFA), serve as a signal peptide directing secretion. Residues 20-31 (AEDLQKAKHAPF) constitute a propeptide that is removed on maturation. 3 disulfides stabilise this stretch: Cys-37/Cys-72, Cys-39/Cys-65, and Cys-55/Cys-73.

The protein belongs to the sea anemone type 3 (BDS) potassium channel toxin family. In terms of tissue distribution, moderately expressed in the ectodermal tissue from the distal and proximal tentacles, body wall, and oral disk.

The protein localises to the secreted. The protein resides in the nematocyst. Its function is as follows. Blocks Kv3 voltage-gated potassium channels. Reduces blood pressure. In Anemonia viridis (Snakelocks anemone), this protein is Kappa-actitoxin-Avd4g.